The primary structure comprises 864 residues: Probable beta-glucosidase J (864 aa).

Residue Asp233 is part of the active site. The PA14 domain occupies 411-578 (TGEPGYTFRV…DTDAAIQQAV (168 aa)). 3 N-linked (GlcNAc...) asparagine glycosylation sites follow: Asn434, Asn447, and Asn503.

It belongs to the glycosyl hydrolase 3 family.

The protein resides in the secreted. It carries out the reaction Hydrolysis of terminal, non-reducing beta-D-glucosyl residues with release of beta-D-glucose.. It participates in glycan metabolism; cellulose degradation. Beta-glucosidases are one of a number of cellulolytic enzymes involved in the degradation of cellulosic biomass. Catalyzes the last step releasing glucose from the inhibitory cellobiose. The protein is Probable beta-glucosidase J (bglJ) of Neosartorya fischeri (strain ATCC 1020 / DSM 3700 / CBS 544.65 / FGSC A1164 / JCM 1740 / NRRL 181 / WB 181) (Aspergillus fischerianus).